A 101-amino-acid polypeptide reads, in one-letter code: MILEHVLVLSAYLFSIGIYGLITSRNMVRALMCLELLLNSVNLNFVTFSDFFDSRQLKGDIFSIFIIAIAAAEATIGLAIVSSIYRNRKSIRINQSNLLNK.

A run of 3 helical transmembrane segments spans residues 2-22 (ILEH…YGLI), 30-52 (ALMC…SDFF), and 61-81 (IFSI…LAIV).

The protein belongs to the complex I subunit 4L family. As to quaternary structure, NDH is composed of at least 16 different subunits, 5 of which are encoded in the nucleus.

The protein resides in the plastid. Its subcellular location is the chloroplast thylakoid membrane. It carries out the reaction a plastoquinone + NADH + (n+1) H(+)(in) = a plastoquinol + NAD(+) + n H(+)(out). The enzyme catalyses a plastoquinone + NADPH + (n+1) H(+)(in) = a plastoquinol + NADP(+) + n H(+)(out). Functionally, NDH shuttles electrons from NAD(P)H:plastoquinone, via FMN and iron-sulfur (Fe-S) centers, to quinones in the photosynthetic chain and possibly in a chloroplast respiratory chain. The immediate electron acceptor for the enzyme in this species is believed to be plastoquinone. Couples the redox reaction to proton translocation, and thus conserves the redox energy in a proton gradient. This chain is NAD(P)H-quinone oxidoreductase subunit 4L, chloroplastic, found in Oenothera glazioviana (Large-flowered evening primrose).